A 95-amino-acid chain; its full sequence is Protein TusB (95 aa).

The protein belongs to the DsrH/TusB family. As to quaternary structure, heterohexamer, formed by a dimer of trimers. The hexameric TusBCD complex contains 2 copies each of TusB, TusC and TusD. The TusBCD complex interacts with TusE.

The protein localises to the cytoplasm. Functionally, part of a sulfur-relay system required for 2-thiolation of 5-methylaminomethyl-2-thiouridine (mnm(5)s(2)U) at tRNA wobble positions. This is Protein TusB from Pectobacterium carotovorum subsp. carotovorum (strain PC1).